Here is a 693-residue protein sequence, read N- to C-terminus: Heat shock protein homolog SSE1 (693 aa).

The interval 665–693 (LAEKLAAQRKAESEKKESKADAEGDVELD) is disordered. Residues 673 to 686 (RKAESEKKESKADA) are compositionally biased toward basic and acidic residues.

This sequence belongs to the heat shock protein 70 family.

Its subcellular location is the cytoplasm. The polypeptide is Heat shock protein homolog SSE1 (SSE1) (Lachancea kluyveri (strain ATCC 58438 / CBS 3082 / BCRC 21498 / NBRC 1685 / JCM 7257 / NCYC 543 / NRRL Y-12651) (Yeast)).